The chain runs to 92 residues: Small nuclear ribonucleoprotein E (92 aa).

A Sm domain is found at 18–92; the sequence is INLIFRYLQN…NITLLQSVSN (75 aa).

It belongs to the snRNP Sm proteins family. As to quaternary structure, core component of the spliceosomal U1, U2, U4 and U5 small nuclear ribonucleoproteins (snRNPs), the building blocks of the spliceosome. Most spliceosomal snRNPs contain a common set of Sm proteins, snrpb, snrpd1, snrpd2, snrpd3, snrpe, snrpf and snrpg that assemble in a heptameric protein ring on the Sm site of the small nuclear RNA to form the core snRNP. Component of the U1 snRNP. The U1 snRNP is composed of the U1 snRNA and the 7 core Sm proteins snrpb, snrpd1, snrpd2, snrpd3, snrpe, snrpf and snrpg, and at least three U1 snRNP-specific proteins snrnp70/u1-70k, snrpa/u1-a and snrpc/u1-c. Component of the U4/U6-U5 tri-snRNP complex composed of the U4, U6 and U5 snRNAs and at least prpf3, prpf4, prpf6, prpf8, prpf31, snrnp200, txnl4a, snrnp40, snrpb, snrpd1, snrpd2, snrpd3, snrpe, snrpf, snrpg, ddx23, cd2bp2, ppih, snu13, eftud2, sart1 and usp39, plus lsm2, lsm3, lsm4, lsm5, lsm6, lsm7 and lsm8. Component of the U7 snRNP complex, or U7 Sm protein core complex, that is composed of the U7 snRNA and at least lsm10, lsm11, snrpb, snrpd3, snrpe, snrpf and snrpg; the complex does not contain snrpd1 and snrpd2. Component of the minor spliceosome, which splices U12-type introns. Part of the SMN-Sm complex that contains smn1, gemin2/sip1, ddx20/gemin3, gemin4, gemin5, gemin6, gemin7, gemin8, strap/unrip and the Sm proteins snrpb, snrpd1, snrpd2, snrpd3, snrpe, snrpf and snrpg; catalyzes core snRNPs assembly. Forms a 6S pICln-Sm complex composed of clns1a/pICln, snrpd1, snrpd2, snrpe, snrpf and snrpg; ring-like structure where clns1a/pICln mimics additional Sm proteins and which is unable to assemble into the core snRNP.

The protein localises to the cytoplasm. Its subcellular location is the cytosol. It localises to the nucleus. Functionally, plays a role in pre-mRNA splicing as a core component of the spliceosomal U1, U2, U4 and U5 small nuclear ribonucleoproteins (snRNPs), the building blocks of the spliceosome. Component of both the pre-catalytic spliceosome B complex and activated spliceosome C complexes. As a component of the minor spliceosome, involved in the splicing of U12-type introns in pre-mRNAs. As part of the U7 snRNP it is involved in histone 3'-end processing. The polypeptide is Small nuclear ribonucleoprotein E (snrpe) (Danio rerio (Zebrafish)).